A 279-amino-acid chain; its full sequence is uncharacterized protein (279 aa).

Positions 1–77 (MGILEQLENP…VTLAKEISNK (77 aa)) constitute an HTH rpiR-type domain. Residues 37–56 (ISIIAKESGVGEATITRFTK) constitute a DNA-binding region (H-T-H motif). The 141-residue stretch at 123 to 263 (CRDLIMNAKR…YTEVIKEMFS (141 aa)) folds into the SIS domain.

This is an uncharacterized protein from Clostridium perfringens (strain 13 / Type A).